Here is a 1073-residue protein sequence, read N- to C-terminus: Receptor-type guanylate cyclase gcy-23 (1073 aa).

The signal sequence occupies residues 1–15; that stretch reads MRRELFIFLLLLGEC. At 16-458 the chain is on the extracellular side; the sequence is ANVKVKVGHI…FRNEKCDYTT (443 aa). Asn336 carries an N-linked (GlcNAc...) asparagine glycan. The helical transmembrane segment at 459–479 threads the bilayer; sequence LIIGGCIVLLIILLIICFFIL. The Cytoplasmic portion of the chain corresponds to 480-1073; it reads SRVCENRALA…QQQNFSQLGI (594 aa). In terms of domain architecture, Protein kinase spans 508-808; the sequence is MKSMLSIGSS…RVRLNTENYL (301 aa). A coiled-coil region spans residues 813–844; the sequence is SLVDQMMRMMEQYANNLEKLVAERTGMLEEAN. Residues 878–1008 form the Guanylate cyclase domain; it reads TVMFSDIVGF…DTVNVASRME (131 aa). The Mg(2+) site is built by Asp883, Ile884, and Asp927.

This sequence belongs to the adenylyl cyclase class-4/guanylyl cyclase family. In terms of tissue distribution, expressed specifically in AFD sensory neurons.

It is found in the cell membrane. It localises to the cell projection. Its subcellular location is the cilium. It catalyses the reaction GTP = 3',5'-cyclic GMP + diphosphate. Guanylate cyclase involved in the production of the second messenger cGMP. Regulates thermotaxis responses in AFD sensory neurons. May regulate AFD neuronal activity such as calcium responses to temperature gradients. In Caenorhabditis elegans, this protein is Receptor-type guanylate cyclase gcy-23.